The following is a 430-amino-acid chain: Phosphoribosylamine--glycine ligase (430 aa).

An ATP-grasp domain is found at 109–316; it reads KDFMARHGIP…LLDLIEAALN (208 aa). Residue 135–196 coordinates ATP; the sequence is VRQQGAPIVI…EEYLDGEEAS (62 aa). Mg(2+)-binding residues include Glu286 and Asn288.

It belongs to the GARS family. It depends on Mg(2+) as a cofactor. The cofactor is Mn(2+).

The catalysed reaction is 5-phospho-beta-D-ribosylamine + glycine + ATP = N(1)-(5-phospho-beta-D-ribosyl)glycinamide + ADP + phosphate + H(+). The protein operates within purine metabolism; IMP biosynthesis via de novo pathway; N(1)-(5-phospho-D-ribosyl)glycinamide from 5-phospho-alpha-D-ribose 1-diphosphate: step 2/2. This is Phosphoribosylamine--glycine ligase from Xylella fastidiosa (strain Temecula1 / ATCC 700964).